The primary structure comprises 82 residues: Small ribosomal subunit protein bS18 (82 aa).

This sequence belongs to the bacterial ribosomal protein bS18 family. In terms of assembly, part of the 30S ribosomal subunit. Forms a tight heterodimer with protein bS6.

Functionally, binds as a heterodimer with protein bS6 to the central domain of the 16S rRNA, where it helps stabilize the platform of the 30S subunit. This is Small ribosomal subunit protein bS18 from Bifidobacterium adolescentis (strain ATCC 15703 / DSM 20083 / NCTC 11814 / E194a).